The sequence spans 343 residues: Methionine import ATP-binding protein MetN 2 (343 aa).

An ABC transporter domain is found at 2 to 241; the sequence is IEFKDVTKTF…PQQAVTKRFV (240 aa). Position 38-45 (38-45) interacts with ATP; sequence GYSGAGKS.

The protein belongs to the ABC transporter superfamily. Methionine importer (TC 3.A.1.24) family. As to quaternary structure, the complex is composed of two ATP-binding proteins (MetN), two transmembrane proteins (MetI) and a solute-binding protein (MetQ).

Its subcellular location is the cell membrane. The enzyme catalyses L-methionine(out) + ATP + H2O = L-methionine(in) + ADP + phosphate + H(+). It catalyses the reaction D-methionine(out) + ATP + H2O = D-methionine(in) + ADP + phosphate + H(+). Functionally, part of the ABC transporter complex MetNIQ involved in methionine import. Responsible for energy coupling to the transport system. This is Methionine import ATP-binding protein MetN 2 from Lactiplantibacillus plantarum (strain ATCC BAA-793 / NCIMB 8826 / WCFS1) (Lactobacillus plantarum).